The chain runs to 186 residues: Threonylcarbamoyl-AMP synthase (186 aa).

The YrdC-like domain maps to 5–186; the sequence is LLTIKAAAKL…WEAQTQKRLR (182 aa).

Belongs to the SUA5 family. TsaC subfamily.

The protein resides in the cytoplasm. It carries out the reaction L-threonine + hydrogencarbonate + ATP = L-threonylcarbamoyladenylate + diphosphate + H2O. Required for the formation of a threonylcarbamoyl group on adenosine at position 37 (t(6)A37) in tRNAs that read codons beginning with adenine. Catalyzes the conversion of L-threonine, HCO(3)(-)/CO(2) and ATP to give threonylcarbamoyl-AMP (TC-AMP) as the acyladenylate intermediate, with the release of diphosphate. The polypeptide is Threonylcarbamoyl-AMP synthase (Hydrogenovibrio crunogenus (strain DSM 25203 / XCL-2) (Thiomicrospira crunogena)).